The primary structure comprises 291 residues: Exosome complex component RRP42 (291 aa).

Alanine 2 carries the post-translational modification N-acetylalanine. Lysine 116 carries the post-translational modification N6-acetyllysine. Serine 177 is modified (phosphoserine).

Belongs to the RNase PH family. Component of the RNA exosome core complex (Exo-9), composed of EXOSC1, EXOSC2, EXOSC3, EXOSC4, EXOSC5, EXOSC6, EXOSC7, EXOSC8 and EXOSC9; within the complex interacts with EXOSC2 and EXOSC4. The catalytically inactive RNA exosome core complex (Exo-9) associates with the catalytic subunit EXOSC10/RRP6. Exo-9 may associate with DIS3 to form the nucleolar exosome complex, or DIS3L to form the cytoplasmic exosome complex. Exo-9 is formed by a hexameric base ring consisting of the heterodimers EXOSC4-EXOSC9, EXOSC5-EXOSC8 and EXOSC6-EXOSC7, and a cap ring consisting of EXOSC1, EXOSC2 and EXOSC3. The RNA exosome complex associates with cofactors C1D/RRP47, MPHOSPH6/MPP6 and MTREX/MTR4. Interacts with ZC3HAV1. Interacts with DIS3; the interaction is direct.

It is found in the nucleus. The protein localises to the nucleolus. Its subcellular location is the cytoplasm. Its function is as follows. Non-catalytic component of the RNA exosome complex which has 3'-&gt;5' exoribonuclease activity and participates in a multitude of cellular RNA processing and degradation events. In the nucleus, the RNA exosome complex is involved in proper maturation of stable RNA species such as rRNA, snRNA and snoRNA, in the elimination of RNA processing by-products and non-coding 'pervasive' transcripts, such as antisense RNA species and promoter-upstream transcripts (PROMPTs), and of mRNAs with processing defects, thereby limiting or excluding their export to the cytoplasm. The RNA exosome may be involved in Ig class switch recombination (CSR) and/or Ig variable region somatic hypermutation (SHM) by targeting AICDA deamination activity to transcribed dsDNA substrates. In the cytoplasm, the RNA exosome complex is involved in general mRNA turnover and specifically degrades inherently unstable mRNAs containing AU-rich elements (AREs) within their 3' untranslated regions, and in RNA surveillance pathways, preventing translation of aberrant mRNAs. It seems to be involved in degradation of histone mRNA. The catalytic inactive RNA exosome core complex of 9 subunits (Exo-9) is proposed to play a pivotal role in the binding and presentation of RNA for ribonucleolysis, and to serve as a scaffold for the association with catalytic subunits and accessory proteins or complexes. The polypeptide is Exosome complex component RRP42 (EXOSC7) (Homo sapiens (Human)).